The primary structure comprises 90 residues: Protein PRAC2 (90 aa).

Highly expressed in prostate and testis. Also detected in placenta, muscle, colon, peripheral blood leukocytes and skin.

The protein localises to the nucleus. The chain is Protein PRAC2 from Homo sapiens (Human).